The sequence spans 549 residues: Undecaprenyl phosphate-alpha-4-amino-4-deoxy-L-arabinose arabinosyl transferase (549 aa).

12 consecutive transmembrane segments (helical) span residues 9–29 (LLLI…GLWI), 80–100 (LFGV…LAYL), 112–132 (SLAC…SGYA), 136–156 (PQFT…LDAG), 176–196 (FLTK…PYML), 204–224 (LLGY…PWAL), 256–276 (PWWF…GLLP), 288–308 (QPPV…FSLS), 312–332 (LPTY…HALV), 346–366 (NGLL…YLQL), 376–396 (FELF…LAQW), and 402–422 (AWAA…AAMP).

This sequence belongs to the glycosyltransferase 83 family.

The protein localises to the cell inner membrane. The enzyme catalyses 4-amino-4-deoxy-alpha-L-arabinopyranosyl di-trans,octa-cis-undecaprenyl phosphate + lipid IVA = lipid IIA + di-trans,octa-cis-undecaprenyl phosphate.. It functions in the pathway lipopolysaccharide metabolism; 4-amino-4-deoxy-beta-L-arabinose-lipid A biosynthesis. In terms of biological role, catalyzes the transfer of the L-Ara4N moiety of the glycolipid undecaprenyl phosphate-alpha-L-Ara4N to lipid A. The modified arabinose is attached to lipid A and is required for resistance to polymyxin and cationic antimicrobial peptides. In Pseudomonas paraeruginosa (strain DSM 24068 / PA7) (Pseudomonas aeruginosa (strain PA7)), this protein is Undecaprenyl phosphate-alpha-4-amino-4-deoxy-L-arabinose arabinosyl transferase.